A 533-amino-acid chain; its full sequence is ATP synthase F(1) complex catalytic subunit beta, mitochondrial (533 aa).

The transit peptide at 1–53 directs the protein to the mitochondrion; sequence MLGLAGRCSAAAASAARPALRRAAGPSHGFLPLLLSRGAGPAAAVGARRDHAA. ADP is bound by residues glycine 214, valine 215, glycine 216, lysine 217, threonine 218, and valine 219. Glycine 214 contributes to the ATP binding site. Glycine 214, valine 215, glycine 216, lysine 217, and threonine 218 together coordinate phosphate. ATP-binding residues include glycine 216, lysine 217, threonine 218, and valine 219. Threonine 218 contributes to the Mg(2+) binding site. Mg(2+) is bound at residue glutamate 243. Arginine 244 contacts ATP.

As to quaternary structure, homotrimer. Component of the ATP synthase complex composed at least of ATP5F1A/subunit alpha, ATP5F1B/subunit beta, ATP5MC1/subunit c (homooctomer), MT-ATP6/subunit a, MT-ATP8/subunit 8, ATP5ME/subunit e, ATP5MF/subunit f, ATP5MG/subunit g, ATP5MK/subunit k, ATP5MJ/subunit j, ATP5F1C/subunit gamma, ATP5F1D/subunit delta, ATP5F1E/subunit epsilon, ATP5PF/subunit F6, ATP5PB/subunit b, ATP5PD/subunit d, ATP5PO/subunit OSCP. ATP synthase complex consists of a soluble F(1) head domain (subunits alpha(3) and beta(3)) - the catalytic core - and a membrane F(0) domain - the membrane proton channel (subunits c, a, 8, e, f, g, k and j). These two domains are linked by a central stalk (subunits gamma, delta, and epsilon) rotating inside the F1 region and a stationary peripheral stalk (subunits F6, b, d, and OSCP).

Its subcellular location is the mitochondrion inner membrane. It carries out the reaction ATP + H2O + 4 H(+)(in) = ADP + phosphate + 5 H(+)(out). Its function is as follows. Catalytic subunit beta, of the mitochondrial membrane ATP synthase complex (F(1)F(0) ATP synthase or Complex V) that produces ATP from ADP in the presence of a proton gradient across the membrane which is generated by electron transport complexes of the respiratory chain. ATP synthase complex consist of a soluble F(1) head domain - the catalytic core - and a membrane F(1) domain - the membrane proton channel. These two domains are linked by a central stalk rotating inside the F(1) region and a stationary peripheral stalk. During catalysis, ATP synthesis in the catalytic domain of F(1) is coupled via a rotary mechanism of the central stalk subunits to proton translocation. In vivo, can only synthesize ATP although its ATP hydrolase activity can be activated artificially in vitro. With the subunit alpha (ATP5F1A), forms the catalytic core in the F(1) domain. This chain is ATP synthase F(1) complex catalytic subunit beta, mitochondrial, found in Gallus gallus (Chicken).